The following is a 614-amino-acid chain: 1-deoxy-D-xylulose-5-phosphate synthase (614 aa).

Residues histidine 74 and 115–117 (GHS) contribute to the thiamine diphosphate site. Aspartate 146 lines the Mg(2+) pocket. Thiamine diphosphate contacts are provided by residues 147-148 (GA), asparagine 175, tyrosine 282, and glutamate 363. Asparagine 175 is a binding site for Mg(2+).

It belongs to the transketolase family. DXPS subfamily. In terms of assembly, homodimer. Mg(2+) serves as cofactor. The cofactor is thiamine diphosphate.

It catalyses the reaction D-glyceraldehyde 3-phosphate + pyruvate + H(+) = 1-deoxy-D-xylulose 5-phosphate + CO2. It functions in the pathway metabolic intermediate biosynthesis; 1-deoxy-D-xylulose 5-phosphate biosynthesis; 1-deoxy-D-xylulose 5-phosphate from D-glyceraldehyde 3-phosphate and pyruvate: step 1/1. In terms of biological role, catalyzes the acyloin condensation reaction between C atoms 2 and 3 of pyruvate and glyceraldehyde 3-phosphate to yield 1-deoxy-D-xylulose-5-phosphate (DXP). The chain is 1-deoxy-D-xylulose-5-phosphate synthase from Methylobacillus flagellatus (strain ATCC 51484 / DSM 6875 / VKM B-1610 / KT).